The sequence spans 197 residues: dITP/XTP pyrophosphatase (197 aa).

Residue 10 to 15 (TKNQGK) coordinates substrate. Catalysis depends on Asp70, which acts as the Proton acceptor. Asp70 lines the Mg(2+) pocket. Substrate contacts are provided by residues Ser71, 151 to 154 (FGYD), Lys173, and 178 to 179 (HR).

It belongs to the HAM1 NTPase family. As to quaternary structure, homodimer. Mg(2+) is required as a cofactor.

It carries out the reaction XTP + H2O = XMP + diphosphate + H(+). The enzyme catalyses dITP + H2O = dIMP + diphosphate + H(+). The catalysed reaction is ITP + H2O = IMP + diphosphate + H(+). In terms of biological role, pyrophosphatase that catalyzes the hydrolysis of nucleoside triphosphates to their monophosphate derivatives, with a high preference for the non-canonical purine nucleotides XTP (xanthosine triphosphate), dITP (deoxyinosine triphosphate) and ITP. Seems to function as a house-cleaning enzyme that removes non-canonical purine nucleotides from the nucleotide pool, thus preventing their incorporation into DNA/RNA and avoiding chromosomal lesions. The protein is dITP/XTP pyrophosphatase of Symbiobacterium thermophilum (strain DSM 24528 / JCM 14929 / IAM 14863 / T).